Consider the following 189-residue polypeptide: UPF0312 protein VV2_0231 (189 aa).

Positions 1 to 22 (MRKSVIATGLALMMAVPFAANA) are cleaved as a signal peptide.

It belongs to the UPF0312 family. Type 1 subfamily.

It is found in the periplasm. The polypeptide is UPF0312 protein VV2_0231 (Vibrio vulnificus (strain CMCP6)).